Reading from the N-terminus, the 303-residue chain is Energy-coupling factor transporter ATP-binding protein EcfA2 (303 aa).

The ABC transporter domain maps to 17–260; it reads LSVSNLSCFF…EAFLAHTTII (244 aa). 54–61 contacts ATP; sequence GDSGSGKS.

It belongs to the ABC transporter superfamily. Energy-coupling factor EcfA family. Forms a stable energy-coupling factor (ECF) transporter complex composed of 2 membrane-embedded substrate-binding proteins (S component), 2 ATP-binding proteins (A component) and 2 transmembrane proteins (T component).

It localises to the cell membrane. Functionally, ATP-binding (A) component of a common energy-coupling factor (ECF) ABC-transporter complex. Unlike classic ABC transporters this ECF transporter provides the energy necessary to transport a number of different substrates. The polypeptide is Energy-coupling factor transporter ATP-binding protein EcfA2 (Mycoplasma pneumoniae (strain ATCC 29342 / M129 / Subtype 1) (Mycoplasmoides pneumoniae)).